A 290-amino-acid chain; its full sequence is Carbonic anhydrase-related protein (290 aa).

S5 carries the post-translational modification Phosphoserine. In terms of domain architecture, Alpha-carbonic anhydrase spans 27-289; sequence VEWGYEEGVE…LSDRVIRAAF (263 aa). The Proton donor/acceptor role is filled by H87. Zn(2+) contacts are provided by H118 and H141.

The protein belongs to the alpha-carbonic anhydrase family.

In terms of biological role, does not have a carbonic anhydrase catalytic activity. This is Carbonic anhydrase-related protein (Ca8) from Rattus norvegicus (Rat).